The sequence spans 55 residues: Potassium channel toxin alpha-KTx 17.1 (55 aa).

The signal sequence occupies residues 1–23; it reads MKFIIVLILISVLIATIVPVNEA. Residue Gln24 is modified to Pyrrolidone carboxylic acid. 3 disulfides stabilise this stretch: Cys27–Cys43, Cys33–Cys48, and Cys37–Cys50. Threonine amide is present on Thr53.

The protein belongs to the short scorpion toxin superfamily. Potassium channel inhibitor family. Alpha-KTx 17 subfamily. In terms of tissue distribution, expressed by the venom gland.

It localises to the secreted. In terms of biological role, blocker of potassium channels, which inhibits both the delayed rectifier and fast transient potassium current. The inhibition is reversible and voltage-independent. It causes a depolarizing shift of the steady-state activation curve of the currents, without changing their steady-state inactivation behavior. The sequence is that of Potassium channel toxin alpha-KTx 17.1 from Olivierus martensii (Manchurian scorpion).